Reading from the N-terminus, the 577-residue chain is MEESHFNSNPYFWPSIPTVSGQIENTMFINKMKDQLLPEKGCGLAPPHYPTLLTVPASVSLPSGISMDTESKSDQLTPHSQASVTQNITVVPVPSTGLMTAGVSCSQRWRREGSQSRGPGLVITSPSGSLVTTASSAQTFPISAPMIVSALPPGSQALQVVPDLSKKVASTLTEEGGGGGGGGGSVAPKPPRGRKKKRMLESGLPEMNDPYVLSPEDDDDHQKDGKTYRCRMCSLTFYSKSEMQIHSKSHTETKPHKCPHCSKTFANSSYLAQHIRIHSGAKPYSCNFCEKSFRQLSHLQQHTRIHSKMHTETIKPHKCPHCSKTFANTSYLAQHLRIHSGAKPYNCSYCQKAFRQLSHLQQHTRIHTGDRPYKCAHPGCEKAFTQLSNLQSHRRQHNKDKPFKCHNCHRAYTDAASLEVHLSTHTVKHAKVYTCTICSRAYTSETYLMKHMRKHNPPDLQQQVQAAAAAAAVAQAQAQAQAQAQAQAQAQAQAQASQASQQQQQQQQQQQQQQQQPPPHFQSPGAAPQGGGGGDSNPNPPPQCSFDLTPYKTAEHHKDICLTVTTSTIQVEHLASS.

The interval 171-225 (TLTEEGGGGGGGGGSVAPKPPRGRKKKRMLESGLPEMNDPYVLSPEDDDDHQKDG) is disordered. Gly residues predominate over residues 175–185 (EGGGGGGGGGS). Phosphoserine is present on Ser214. 8 consecutive C2H2-type zinc fingers follow at residues 228–250 (YRCR…SKSH), 256–278 (HKCP…IRIH), 284–306 (YSCN…TRIH), 317–339 (HKCP…LRIH), 345–367 (YNCS…TRIH), 373–397 (YKCA…RRQH), 403–425 (FKCH…LSTH), and 433–455 (YTCT…MRKH). Over residues 501–515 (QQQQQQQQQQQQQQQ) the composition is skewed to low complexity. The disordered stretch occupies residues 501 to 550 (QQQQQQQQQQQQQQQQPPPHFQSPGAAPQGGGGGDSNPNPPPQCSFDLTP).

The protein belongs to the krueppel C2H2-type zinc-finger protein family. Interacts with BCAR1.

It localises to the nucleus. Its function is as follows. Transcription factor that binds the consensus DNA sequence [GC]AAAAA. Seems to bind and regulate the promoters of MMP1, MMP3, MMP7 and COL1A1. In Homo sapiens (Human), this protein is Zinc finger protein 384 (ZNF384).